An 88-amino-acid chain; its full sequence is MATKIRLARAGAKKKPFYQIIVADVRSRRDGRFIENVGTYDPNQNPAAVKFEEAKTLEWLGKGAQPTDTVKQILKKAGIWEKFVAKSV.

The protein belongs to the bacterial ribosomal protein bS16 family.

This Geobacter sulfurreducens (strain ATCC 51573 / DSM 12127 / PCA) protein is Small ribosomal subunit protein bS16.